The following is a 427-amino-acid chain: Arginine biosynthesis bifunctional protein ArgJ (427 aa).

Substrate contacts are provided by threonine 174, lysine 200, threonine 211, glutamate 291, asparagine 422, and threonine 427. Threonine 211 acts as the Nucleophile in catalysis.

The protein belongs to the ArgJ family. In terms of assembly, heterotetramer of two alpha and two beta chains.

The protein resides in the cytoplasm. It carries out the reaction N(2)-acetyl-L-ornithine + L-glutamate = N-acetyl-L-glutamate + L-ornithine. The enzyme catalyses L-glutamate + acetyl-CoA = N-acetyl-L-glutamate + CoA + H(+). It functions in the pathway amino-acid biosynthesis; L-arginine biosynthesis; L-ornithine and N-acetyl-L-glutamate from L-glutamate and N(2)-acetyl-L-ornithine (cyclic): step 1/1. The protein operates within amino-acid biosynthesis; L-arginine biosynthesis; N(2)-acetyl-L-ornithine from L-glutamate: step 1/4. Catalyzes two activities which are involved in the cyclic version of arginine biosynthesis: the synthesis of N-acetylglutamate from glutamate and acetyl-CoA as the acetyl donor, and of ornithine by transacetylation between N(2)-acetylornithine and glutamate. This chain is Arginine biosynthesis bifunctional protein ArgJ, found in Prochlorococcus marinus (strain MIT 9313).